A 176-amino-acid polypeptide reads, in one-letter code: Zinc finger protein 428 (176 aa).

Positions 1–152 (MTETREPTET…EEEGGTYHCT (152 aa)) are disordered. Over residues 16–46 (LEEDDEDLSPEPDSEEEEEEEEEETTDDPEY) the composition is skewed to acidic residues. A Phosphothreonine modification is found at threonine 96. Basic and acidic residues predominate over residues 126 to 138 (PSRTGETRPAGRD). The C2H2-type zinc-finger motif lies at 149 to 171 (YHCTECEDSFDNLGELHGHFMLH).

This is Zinc finger protein 428 (Znf428) from Mus musculus (Mouse).